The chain runs to 100 residues: Small ribosomal subunit protein uS14c (100 aa).

This sequence belongs to the universal ribosomal protein uS14 family. Part of the 30S ribosomal subunit.

Its subcellular location is the plastid. The protein resides in the chloroplast. Binds 16S rRNA, required for the assembly of 30S particles. The chain is Small ribosomal subunit protein uS14c from Platanus occidentalis (Sycamore).